The chain runs to 453 residues: CCA-adding enzyme (453 aa).

ATP-binding residues include S53 and K56. CTP is bound by residues S53 and K56. Mg(2+) is bound by residues D65, D67, and D119. Residues H142, K161, and Y170 each contribute to the ATP site. Residues H142, K161, and Y170 each coordinate CTP.

This sequence belongs to the tRNA nucleotidyltransferase/poly(A) polymerase family. Archaeal CCA-adding enzyme subfamily. As to quaternary structure, homodimer. The cofactor is Mg(2+).

It catalyses the reaction a tRNA precursor + 2 CTP + ATP = a tRNA with a 3' CCA end + 3 diphosphate. It carries out the reaction a tRNA with a 3' CCA end + 2 CTP + ATP = a tRNA with a 3' CCACCA end + 3 diphosphate. In terms of biological role, catalyzes the addition and repair of the essential 3'-terminal CCA sequence in tRNAs without using a nucleic acid template. Adds these three nucleotides in the order of C, C, and A to the tRNA nucleotide-73, using CTP and ATP as substrates and producing inorganic pyrophosphate. tRNA 3'-terminal CCA addition is required both for tRNA processing and repair. Also involved in tRNA surveillance by mediating tandem CCA addition to generate a CCACCA at the 3' terminus of unstable tRNAs. While stable tRNAs receive only 3'-terminal CCA, unstable tRNAs are marked with CCACCA and rapidly degraded. The protein is CCA-adding enzyme of Pyrococcus furiosus (strain ATCC 43587 / DSM 3638 / JCM 8422 / Vc1).